Consider the following 178-residue polypeptide: E1B protein, small T-antigen (178 aa).

The protein belongs to the adenoviridae E1B 19 kDa protein family.

The protein localises to the host cell membrane. Its subcellular location is the host nucleus envelope. The protein resides in the host nucleus lamina. Its function is as follows. Putative adenovirus Bcl-2 homolog that inhibits apoptosis induced by TNF or FAS pathways, as well as p53-mediated apoptosis. Without E1B 19K function, virus production is compromised because of premature death of host cell. Interacts with Bax protein in cell lysates. This Human adenovirus B serotype 7 (HAdV-7) protein is E1B protein, small T-antigen.